The following is a 176-amino-acid chain: Isopentenyl-diphosphate Delta-isomerase (176 aa).

His22 and His28 together coordinate Mn(2+). A Nudix hydrolase domain is found at 26–160 (LRHKAVSVFV…PERYTPWLRI (135 aa)). The active site involves Cys62. His64 is a Mn(2+) binding site. Residue Glu82 coordinates Mg(2+). Mn(2+) contacts are provided by Glu108 and Glu110. Glu110 is an active-site residue.

This sequence belongs to the IPP isomerase type 1 family. It depends on Mg(2+) as a cofactor. Requires Mn(2+) as cofactor.

It localises to the cytoplasm. It carries out the reaction isopentenyl diphosphate = dimethylallyl diphosphate. Its pathway is isoprenoid biosynthesis; dimethylallyl diphosphate biosynthesis; dimethylallyl diphosphate from isopentenyl diphosphate: step 1/1. It participates in porphyrin-containing compound metabolism; chlorophyll biosynthesis. Functionally, catalyzes the 1,3-allylic rearrangement of the homoallylic substrate isopentenyl (IPP) to its highly electrophilic allylic isomer, dimethylallyl diphosphate (DMAPP). This is Isopentenyl-diphosphate Delta-isomerase from Dinoroseobacter shibae (strain DSM 16493 / NCIMB 14021 / DFL 12).